Reading from the N-terminus, the 353-residue chain is Ferrochelatase (353 aa).

Fe cation contacts are provided by histidine 223 and glutamate 304.

The protein belongs to the ferrochelatase family.

The protein resides in the cytoplasm. It carries out the reaction heme b + 2 H(+) = protoporphyrin IX + Fe(2+). It participates in porphyrin-containing compound metabolism; protoheme biosynthesis; protoheme from protoporphyrin-IX: step 1/1. In terms of biological role, catalyzes the ferrous insertion into protoporphyrin IX. The sequence is that of Ferrochelatase from Mesorhizobium japonicum (strain LMG 29417 / CECT 9101 / MAFF 303099) (Mesorhizobium loti (strain MAFF 303099)).